A 73-amino-acid polypeptide reads, in one-letter code: uncharacterized protein (73 aa).

The first 21 residues, 1 to 21, serve as a signal peptide directing secretion; sequence MTLFSSLSSLSTGSLKSSVSS. Over residues 1 to 38 the composition is skewed to low complexity; that stretch reads MTLFSSLSSLSTGSLKSSVSSIETGSSSGSFGSNETSG. Residues 1–43 form a disordered region; that stretch reads MTLFSSLSSLSTGSLKSSVSSIETGSSSGSFGSNETSGWGSHH. N-linked (GlcNAc...) asparagine glycosylation is present at N34.

The protein localises to the secreted. This is an uncharacterized protein from Dictyostelium discoideum (Social amoeba).